The chain runs to 420 residues: Glucose-1-phosphate adenylyltransferase (420 aa).

Residues tyrosine 107, glycine 172, 187–188, and serine 205 each bind alpha-D-glucose 1-phosphate; that span reads EK.

This sequence belongs to the bacterial/plant glucose-1-phosphate adenylyltransferase family. In terms of assembly, homotetramer.

It carries out the reaction alpha-D-glucose 1-phosphate + ATP + H(+) = ADP-alpha-D-glucose + diphosphate. It functions in the pathway glycan biosynthesis; glycogen biosynthesis. In terms of biological role, involved in the biosynthesis of ADP-glucose, a building block required for the elongation reactions to produce glycogen. Catalyzes the reaction between ATP and alpha-D-glucose 1-phosphate (G1P) to produce pyrophosphate and ADP-Glc. The polypeptide is Glucose-1-phosphate adenylyltransferase (Rhizobium etli (strain ATCC 51251 / DSM 11541 / JCM 21823 / NBRC 15573 / CFN 42)).